The chain runs to 332 residues: Probable L-asparaginase (332 aa).

The 327-residue stretch at 6–332 (PTIALLATGG…AKIQEMFEEY (327 aa)) folds into the Asparaginase/glutaminase domain. Thr-16 acts as the O-isoaspartyl threonine intermediate in catalysis. Substrate is bound by residues Ser-62 and 95–96 (TD).

The protein belongs to the asparaginase 1 family.

The protein resides in the cytoplasm. The catalysed reaction is L-asparagine + H2O = L-aspartate + NH4(+). This is Probable L-asparaginase (ansA) from Helicobacter pylori (strain J99 / ATCC 700824) (Campylobacter pylori J99).